Consider the following 495-residue polypeptide: Alpha-1B-glycoprotein (495 aa).

Positions 1–21 (MSMLVVFLLLWGVTWGPVTEA) are cleaved as a signal peptide. Ig-like V-type domains follow at residues 22-113 (AIFY…LTGP), 114-206 (KSLP…ELAA), 207-299 (PPPP…PVEL), 300-397 (ILSD…LHVD), and 398-495 (GPPP…VAES). A glycan (N-linked (GlcNAc...) (complex) asparagine) is linked at asparagine 44. Disulfide bonds link cysteine 49/cysteine 93, cysteine 139/cysteine 182, cysteine 232/cysteine 279, cysteine 325/cysteine 374, and cysteine 423/cysteine 470. N-linked (GlcNAc...) asparagine glycosylation occurs at asparagine 179. N-linked (GlcNAc...) asparagine glycosylation is found at asparagine 363 and asparagine 371.

Interacts with CRISP3. As to expression, plasma.

Its subcellular location is the secreted. The polypeptide is Alpha-1B-glycoprotein (A1BG) (Homo sapiens (Human)).